Consider the following 296-residue polypeptide: Phosphatidylserine decarboxylase proenzyme (296 aa).

Active-site charge relay system; for autoendoproteolytic cleavage activity residues include Asp113, His169, and Ser256. Ser256 functions as the Schiff-base intermediate with substrate; via pyruvic acid; for decarboxylase activity in the catalytic mechanism. At Ser256 the chain carries Pyruvic acid (Ser); by autocatalysis.

This sequence belongs to the phosphatidylserine decarboxylase family. PSD-B subfamily. Prokaryotic type II sub-subfamily. As to quaternary structure, heterodimer of a large membrane-associated beta subunit and a small pyruvoyl-containing alpha subunit. Pyruvate is required as a cofactor. In terms of processing, is synthesized initially as an inactive proenzyme. Formation of the active enzyme involves a self-maturation process in which the active site pyruvoyl group is generated from an internal serine residue via an autocatalytic post-translational modification. Two non-identical subunits are generated from the proenzyme in this reaction, and the pyruvate is formed at the N-terminus of the alpha chain, which is derived from the carboxyl end of the proenzyme. The autoendoproteolytic cleavage occurs by a canonical serine protease mechanism, in which the side chain hydroxyl group of the serine supplies its oxygen atom to form the C-terminus of the beta chain, while the remainder of the serine residue undergoes an oxidative deamination to produce ammonia and the pyruvoyl prosthetic group on the alpha chain. During this reaction, the Ser that is part of the protease active site of the proenzyme becomes the pyruvoyl prosthetic group, which constitutes an essential element of the active site of the mature decarboxylase.

The protein localises to the cell membrane. The enzyme catalyses a 1,2-diacyl-sn-glycero-3-phospho-L-serine + H(+) = a 1,2-diacyl-sn-glycero-3-phosphoethanolamine + CO2. The protein operates within phospholipid metabolism; phosphatidylethanolamine biosynthesis; phosphatidylethanolamine from CDP-diacylglycerol: step 2/2. Its function is as follows. Catalyzes the formation of phosphatidylethanolamine (PtdEtn) from phosphatidylserine (PtdSer). This is Phosphatidylserine decarboxylase proenzyme from Clostridium beijerinckii (strain ATCC 51743 / NCIMB 8052) (Clostridium acetobutylicum).